A 290-amino-acid chain; its full sequence is Transcription factor HES-1 (290 aa).

The segment at 1-47 (MPADTGMEKPTASPIAGAPASASHTPDKPRSASEHRKSSKPIMEKRR) is disordered. A compositionally biased stretch (low complexity) spans 10–23 (PTASPIAGAPASAS). The span at 25 to 36 (TPDKPRSASEHR) shows a compositional bias: basic and acidic residues. Residues 35–92 (HRKSSKPIMEKRRRARINESLGQLKMLILDALKKDSSRHSKLEKADILEMTVKHLRNL) form the bHLH domain. The 34-residue stretch at 111-144 (YRAGFNECMNEVTRFLSTCEGVNADVRARLLGHL) folds into the Orange domain. Residues 287–290 (WRPW) carry the WRPW motif motif.

As to quaternary structure, transcription repression requires formation of a complex with a corepressor protein of the Groucho/TLE family.

It is found in the nucleus. Transcriptional repressor of genes that require a bHLH protein for their transcription. May act as a negative regulator of myogenesis by inhibiting the functions of MYOD1 and ASH1. The sequence is that of Transcription factor HES-1 (HES1) from Gallus gallus (Chicken).